The following is a 141-amino-acid chain: Large ribosomal subunit protein bL17 (141 aa).

It belongs to the bacterial ribosomal protein bL17 family. In terms of assembly, part of the 50S ribosomal subunit. Contacts protein L32.

The chain is Large ribosomal subunit protein bL17 from Bartonella bacilliformis (strain ATCC 35685 / KC583 / Herrer 020/F12,63).